Reading from the N-terminus, the 715-residue chain is Glycine--tRNA ligase beta subunit (715 aa).

It belongs to the class-II aminoacyl-tRNA synthetase family. In terms of assembly, tetramer of two alpha and two beta subunits.

The protein resides in the cytoplasm. The enzyme catalyses tRNA(Gly) + glycine + ATP = glycyl-tRNA(Gly) + AMP + diphosphate. This is Glycine--tRNA ligase beta subunit from Nitrosomonas europaea (strain ATCC 19718 / CIP 103999 / KCTC 2705 / NBRC 14298).